Here is a 129-residue protein sequence, read N- to C-terminus: Large ribosomal subunit protein uL22 (129 aa).

The protein belongs to the universal ribosomal protein uL22 family. As to quaternary structure, part of the 50S ribosomal subunit.

This protein binds specifically to 23S rRNA; its binding is stimulated by other ribosomal proteins, e.g. L4, L17, and L20. It is important during the early stages of 50S assembly. It makes multiple contacts with different domains of the 23S rRNA in the assembled 50S subunit and ribosome. Its function is as follows. The globular domain of the protein is located near the polypeptide exit tunnel on the outside of the subunit, while an extended beta-hairpin is found that lines the wall of the exit tunnel in the center of the 70S ribosome. The chain is Large ribosomal subunit protein uL22 from Bartonella henselae (strain ATCC 49882 / DSM 28221 / CCUG 30454 / Houston 1) (Rochalimaea henselae).